A 312-amino-acid chain; its full sequence is Malate dehydrogenase (312 aa).

NAD(+)-binding positions include 12–17 (GAGFTG) and Asp36. Substrate-binding residues include Arg87 and Arg93. NAD(+)-binding positions include Asn100 and 123-125 (LTN). Substrate is bound at residue Asn125. Ser149 carries the phosphoserine modification. Arg156 lines the substrate pocket. The active-site Proton acceptor is His180.

Belongs to the LDH/MDH superfamily. MDH type 3 family.

It catalyses the reaction (S)-malate + NAD(+) = oxaloacetate + NADH + H(+). Catalyzes the reversible oxidation of malate to oxaloacetate. This is Malate dehydrogenase from Anoxybacillus flavithermus (strain DSM 21510 / WK1).